Reading from the N-terminus, the 252-residue chain is Putative endonuclease C1F12.06c (252 aa).

2 residues coordinate Mg(2+): D43 and D114.

Belongs to the endonuclease V family.

The protein localises to the cytoplasm. It localises to the nucleus. This Schizosaccharomyces pombe (strain 972 / ATCC 24843) (Fission yeast) protein is Putative endonuclease C1F12.06c.